The primary structure comprises 174 residues: Crossover junction endodeoxyribonuclease RuvC (174 aa).

Active-site residues include Asp8, Glu68, and Asp140. Mg(2+) contacts are provided by Asp8, Glu68, and Asp140.

The protein belongs to the RuvC family. Homodimer which binds Holliday junction (HJ) DNA. The HJ becomes 2-fold symmetrical on binding to RuvC with unstacked arms; it has a different conformation from HJ DNA in complex with RuvA. In the full resolvosome a probable DNA-RuvA(4)-RuvB(12)-RuvC(2) complex forms which resolves the HJ. It depends on Mg(2+) as a cofactor.

It is found in the cytoplasm. It catalyses the reaction Endonucleolytic cleavage at a junction such as a reciprocal single-stranded crossover between two homologous DNA duplexes (Holliday junction).. The RuvA-RuvB-RuvC complex processes Holliday junction (HJ) DNA during genetic recombination and DNA repair. Endonuclease that resolves HJ intermediates. Cleaves cruciform DNA by making single-stranded nicks across the HJ at symmetrical positions within the homologous arms, yielding a 5'-phosphate and a 3'-hydroxyl group; requires a central core of homology in the junction. The consensus cleavage sequence is 5'-(A/T)TT(C/G)-3'. Cleavage occurs on the 3'-side of the TT dinucleotide at the point of strand exchange. HJ branch migration catalyzed by RuvA-RuvB allows RuvC to scan DNA until it finds its consensus sequence, where it cleaves and resolves the cruciform DNA. In Legionella pneumophila subsp. pneumophila (strain Philadelphia 1 / ATCC 33152 / DSM 7513), this protein is Crossover junction endodeoxyribonuclease RuvC.